Consider the following 545-residue polypeptide: Calcium-dependent protein kinase 10 (545 aa).

The tract at residues 1-36 (MGNCNACVRPDSKESKPSSKPKKPNRDRKLNPFAGD) is disordered. A lipid anchor (N-myristoyl glycine) is attached at Gly-2. The 259-residue stretch at 63–321 (YILGRELGRG…AQQVLAHPWI (259 aa)) folds into the Protein kinase domain. ATP is bound by residues 69-77 (LGRGEFGIT) and Lys-92. Asp-187 serves as the catalytic Proton acceptor. The residue at position 227 (Ser-227) is a Phosphoserine. An autoinhibitory domain region spans residues 327–357 (APNVPLGDIVRSRLKQFSMMNRFKKKVLRVI). EF-hand domains follow at residues 364-399 (QEVE…VGSQ), 400-435 (LGEP…LQKI), 436-471 (ENDE…ELGE), and 472-507 (PDAS…GTDW). Residues Asp-377, Asp-379, Asp-381, Lys-383, Glu-388, Asp-413, Asp-415, Asn-417, Glu-424, Asp-449, Asp-451, Ser-453, Tyr-455, Glu-460, Asp-485, Asp-487, Asp-489, Arg-491, and Glu-496 each coordinate Ca(2+).

This sequence belongs to the protein kinase superfamily. Ser/Thr protein kinase family. CDPK subfamily.

The protein resides in the membrane. The enzyme catalyses L-seryl-[protein] + ATP = O-phospho-L-seryl-[protein] + ADP + H(+). It catalyses the reaction L-threonyl-[protein] + ATP = O-phospho-L-threonyl-[protein] + ADP + H(+). Activated by calcium. Autophosphorylation may play an important role in the regulation of the kinase activity. In terms of biological role, may play a role in signal transduction pathways that involve calcium as a second messenger. May be a positive regulator controlling stress signal transduction. The polypeptide is Calcium-dependent protein kinase 10 (CPK10) (Arabidopsis thaliana (Mouse-ear cress)).